The primary structure comprises 411 residues: LL-diaminopimelate aminotransferase (411 aa).

2 residues coordinate substrate: Y15 and G42. Pyridoxal 5'-phosphate contacts are provided by residues Y72, 108-109, Y132, N188, Y219, and 247-249; these read AK and SFS. Substrate is bound by residues K109, Y132, and N188. The residue at position 250 (K250) is an N6-(pyridoxal phosphate)lysine. R258 and N293 together coordinate pyridoxal 5'-phosphate. Positions 293 and 389 each coordinate substrate.

It belongs to the class-I pyridoxal-phosphate-dependent aminotransferase family. LL-diaminopimelate aminotransferase subfamily. Homodimer. It depends on pyridoxal 5'-phosphate as a cofactor.

It carries out the reaction (2S,6S)-2,6-diaminopimelate + 2-oxoglutarate = (S)-2,3,4,5-tetrahydrodipicolinate + L-glutamate + H2O + H(+). Its pathway is amino-acid biosynthesis; L-lysine biosynthesis via DAP pathway; LL-2,6-diaminopimelate from (S)-tetrahydrodipicolinate (aminotransferase route): step 1/1. In terms of biological role, involved in the synthesis of meso-diaminopimelate (m-DAP or DL-DAP), required for both lysine and peptidoglycan biosynthesis. Catalyzes the direct conversion of tetrahydrodipicolinate to LL-diaminopimelate. The protein is LL-diaminopimelate aminotransferase of Desulfitobacterium hafniense (strain Y51).